Consider the following 258-residue polypeptide: Snake venom serine protease (258 aa).

The signal sequence occupies residues 1-18; the sequence is MVLIRVLANLLILQLSYA. The propeptide occupies 19–24; the sequence is QKSSEL. In terms of domain architecture, Peptidase S1 spans 25 to 249; it reads VIGGDECNIN…YTEWIQSILA (225 aa). Intrachain disulfides connect C31-C163, C50-C66, C98-C256, C142-C210, C174-C189, and C200-C225. Active-site charge relay system residues include H65 and D110. N-linked (GlcNAc...) asparagine glycosylation occurs at N154. S204 acts as the Charge relay system in catalysis.

The protein belongs to the peptidase S1 family. Snake venom subfamily. As to quaternary structure, monomer. In terms of tissue distribution, expressed by the venom gland.

It is found in the secreted. In terms of biological role, snake venom serine protease that may act in the hemostasis system of the prey. The chain is Snake venom serine protease from Lachesis stenophrys (Central American bushmaster).